The primary structure comprises 594 residues: DEAD-box ATP-dependent RNA helicase 25 (594 aa).

2 disordered regions span residues 56–80 (RSGG…EEGL) and 92–121 (GVRE…VDGS). Positions 126–154 (TRFDQCTISPLSLKAVKDAGYERMTQVQE) match the Q motif motif. One can recognise a Helicase ATP-binding domain in the interval 157–340 (LPVILQGKDV…HIAMKKNYKF (184 aa)). An ATP-binding site is contributed by 170-177 (AKTGTGKT). Positions 288-291 (DEAD) match the DEAD box motif. Positions 370–520 (ILYDVLKKHV…SVDSSTQTIV (151 aa)) constitute a Helicase C-terminal domain.

It belongs to the DEAD box helicase family.

It carries out the reaction ATP + H2O = ADP + phosphate + H(+). The chain is DEAD-box ATP-dependent RNA helicase 25 from Oryza sativa subsp. japonica (Rice).